Here is a 176-residue protein sequence, read N- to C-terminus: Interleukin-7 (176 aa).

The first 25 residues, 1-25, serve as a signal peptide directing secretion; the sequence is MFHVSFRYIFGIPPLILVLLPVASS. 3 cysteine pairs are disulfide-bonded: cysteine 27-cysteine 165, cysteine 58-cysteine 153, and cysteine 71-cysteine 116. Asparagine 94, asparagine 115, and asparagine 140 each carry an N-linked (GlcNAc...) asparagine glycan.

It belongs to the IL-7/IL-9 family.

Its subcellular location is the secreted. Its function is as follows. Hematopoietic growth factor capable of stimulating the proliferation of lymphoid progenitors. It is important for proliferation during certain stages of B-cell maturation. This is Interleukin-7 (IL7) from Sus scrofa (Pig).